Here is a 901-residue protein sequence, read N- to C-terminus: HTH-type transcriptional regulator MalT (901 aa).

Residue 39-46 (SPAGYGKT) participates in ATP binding. The HTH luxR-type domain occupies 829–894 (ELIRTSPLTQ…DAVQHAQQLL (66 aa)). Positions 853 to 872 (NEQIAGELAVAATTIKTHIR) form a DNA-binding region, H-T-H motif.

The protein belongs to the MalT family. As to quaternary structure, monomer in solution. Oligomerizes to an active state in the presence of the positive effectors ATP and maltotriose.

With respect to regulation, activated by ATP and maltotriose, which are both required for DNA binding. Positively regulates the transcription of the maltose regulon whose gene products are responsible for uptake and catabolism of malto-oligosaccharides. Specifically binds to the promoter region of its target genes, recognizing a short DNA motif called the MalT box. The chain is HTH-type transcriptional regulator MalT from Salmonella typhimurium (strain LT2 / SGSC1412 / ATCC 700720).